A 279-amino-acid polypeptide reads, in one-letter code: Thymidylate synthase (279 aa).

Arg-29 contributes to the dUMP binding site. A (6R)-5,10-methylene-5,6,7,8-tetrahydrofolate-binding site is contributed by His-59. 134–135 is a dUMP binding site; the sequence is RR. Cys-154 functions as the Nucleophile in the catalytic mechanism. Residues 181-184, Asn-192, and 222-224 each bind dUMP; these read RSAD and HIY. Asp-184 is a binding site for (6R)-5,10-methylene-5,6,7,8-tetrahydrofolate. Ala-278 lines the (6R)-5,10-methylene-5,6,7,8-tetrahydrofolate pocket.

It belongs to the thymidylate synthase family. Bacterial-type ThyA subfamily. In terms of assembly, homodimer.

Its subcellular location is the cytoplasm. It carries out the reaction dUMP + (6R)-5,10-methylene-5,6,7,8-tetrahydrofolate = 7,8-dihydrofolate + dTMP. Its pathway is pyrimidine metabolism; dTTP biosynthesis. Its function is as follows. Catalyzes the reductive methylation of 2'-deoxyuridine-5'-monophosphate (dUMP) to 2'-deoxythymidine-5'-monophosphate (dTMP) while utilizing 5,10-methylenetetrahydrofolate (mTHF) as the methyl donor and reductant in the reaction, yielding dihydrofolate (DHF) as a by-product. This enzymatic reaction provides an intracellular de novo source of dTMP, an essential precursor for DNA biosynthesis. This Paracidovorax citrulli (strain AAC00-1) (Acidovorax citrulli) protein is Thymidylate synthase.